The following is a 336-amino-acid chain: Holliday junction branch migration complex subunit RuvB (336 aa).

Residues 4 to 184 are large ATPase domain (RuvB-L); sequence SDRLISSQSI…FGIVQRLEYY (181 aa). Residues Ile-23, Arg-24, Gly-65, Lys-68, Thr-69, Thr-70, 131-133, Arg-174, Tyr-184, and Arg-221 contribute to the ATP site; that span reads EDY. Position 69 (Thr-69) interacts with Mg(2+). Positions 185–255 are small ATPAse domain (RuvB-S); the sequence is SVDSLTKIVA…MAQQALEMLE (71 aa). The tract at residues 258-336 is head domain (RuvB-H); that stretch reads QHGFDLMDRK…HFGFSAIEQE (79 aa). 2 residues coordinate DNA: Arg-313 and Arg-318.

It belongs to the RuvB family. In terms of assembly, homohexamer. Forms an RuvA(8)-RuvB(12)-Holliday junction (HJ) complex. HJ DNA is sandwiched between 2 RuvA tetramers; dsDNA enters through RuvA and exits via RuvB. An RuvB hexamer assembles on each DNA strand where it exits the tetramer. Each RuvB hexamer is contacted by two RuvA subunits (via domain III) on 2 adjacent RuvB subunits; this complex drives branch migration. In the full resolvosome a probable DNA-RuvA(4)-RuvB(12)-RuvC(2) complex forms which resolves the HJ.

It localises to the cytoplasm. It carries out the reaction ATP + H2O = ADP + phosphate + H(+). Functionally, the RuvA-RuvB-RuvC complex processes Holliday junction (HJ) DNA during genetic recombination and DNA repair, while the RuvA-RuvB complex plays an important role in the rescue of blocked DNA replication forks via replication fork reversal (RFR). RuvA specifically binds to HJ cruciform DNA, conferring on it an open structure. The RuvB hexamer acts as an ATP-dependent pump, pulling dsDNA into and through the RuvAB complex. RuvB forms 2 homohexamers on either side of HJ DNA bound by 1 or 2 RuvA tetramers; 4 subunits per hexamer contact DNA at a time. Coordinated motions by a converter formed by DNA-disengaged RuvB subunits stimulates ATP hydrolysis and nucleotide exchange. Immobilization of the converter enables RuvB to convert the ATP-contained energy into a lever motion, pulling 2 nucleotides of DNA out of the RuvA tetramer per ATP hydrolyzed, thus driving DNA branch migration. The RuvB motors rotate together with the DNA substrate, which together with the progressing nucleotide cycle form the mechanistic basis for DNA recombination by continuous HJ branch migration. Branch migration allows RuvC to scan DNA until it finds its consensus sequence, where it cleaves and resolves cruciform DNA. This chain is Holliday junction branch migration complex subunit RuvB, found in Legionella pneumophila (strain Paris).